Consider the following 659-residue polypeptide: UvrABC system protein B (659 aa).

Residues Q25–R182 form the Helicase ATP-binding domain. An ATP-binding site is contributed by G38–T45. Residues Y91–I114 carry the Beta-hairpin motif. The 154-residue stretch at Q429–I582 folds into the Helicase C-terminal domain. Residues E622–N657 enclose the UVR domain.

This sequence belongs to the UvrB family. As to quaternary structure, forms a heterotetramer with UvrA during the search for lesions. Interacts with UvrC in an incision complex.

The protein localises to the cytoplasm. Functionally, the UvrABC repair system catalyzes the recognition and processing of DNA lesions. A damage recognition complex composed of 2 UvrA and 2 UvrB subunits scans DNA for abnormalities. Upon binding of the UvrA(2)B(2) complex to a putative damaged site, the DNA wraps around one UvrB monomer. DNA wrap is dependent on ATP binding by UvrB and probably causes local melting of the DNA helix, facilitating insertion of UvrB beta-hairpin between the DNA strands. Then UvrB probes one DNA strand for the presence of a lesion. If a lesion is found the UvrA subunits dissociate and the UvrB-DNA preincision complex is formed. This complex is subsequently bound by UvrC and the second UvrB is released. If no lesion is found, the DNA wraps around the other UvrB subunit that will check the other stand for damage. The sequence is that of UvrABC system protein B from Clostridium perfringens (strain ATCC 13124 / DSM 756 / JCM 1290 / NCIMB 6125 / NCTC 8237 / Type A).